The primary structure comprises 80 residues: Turripeptide VI/VII-01 (80 aa).

Positions 1–22 are cleaved as a signal peptide; the sequence is MRLQLILTITLLLTSFMGYRDA. The propeptide occupies 23 to 36; the sequence is AVIQGKTERSAMKM. Disulfide bonds link cysteine 48–cysteine 61, cysteine 50–cysteine 65, and cysteine 60–cysteine 70. The propeptide occupies 77–80; it reads SSAI.

Expressed by the venom duct.

It is found in the secreted. The protein is Turripeptide VI/VII-01 of Gemmula speciosa (Splendid gem-turris).